Reading from the N-terminus, the 829-residue chain is Periplasmic nitrate reductase (829 aa).

The segment at residues 1 to 29 is a signal peptide (tat-type signal); that stretch reads MKMTRRAFVKANAAASAAAVAGVTLPATA. In terms of domain architecture, 4Fe-4S Mo/W bis-MGD-type spans 41–97; sequence ITWDKAPCRFCGTGCSVLVGTQNGKVVATQGDPEAPVNKGLNCIKGYFLSKIMYGKD. Positions 48, 51, 55, and 83 each coordinate [4Fe-4S] cluster. Mo-bis(molybdopterin guanine dinucleotide) is bound by residues Lys85, Gln152, Asn177, Cys181, 214–221, 245–249, 264–266, Met374, Gln378, Asn484, 510–511, Lys533, Asp560, and 718–727; these read WGSNMAEM, STYYH, QSD, SD, and TGRVLEHWHT. Substrate is bound at residue Phe794. 2 residues coordinate Mo-bis(molybdopterin guanine dinucleotide): Asn802 and Lys819.

This sequence belongs to the prokaryotic molybdopterin-containing oxidoreductase family. NasA/NapA/NarB subfamily. As to quaternary structure, component of the periplasmic nitrate reductase NapAB complex composed of NapA and NapB. It depends on [4Fe-4S] cluster as a cofactor. Mo-bis(molybdopterin guanine dinucleotide) serves as cofactor. Post-translationally, predicted to be exported by the Tat system. The position of the signal peptide cleavage has not been experimentally proven.

The protein resides in the periplasm. The enzyme catalyses 2 Fe(II)-[cytochrome] + nitrate + 2 H(+) = 2 Fe(III)-[cytochrome] + nitrite + H2O. In terms of biological role, catalytic subunit of the periplasmic nitrate reductase complex NapAB. Receives electrons from NapB and catalyzes the reduction of nitrate to nitrite. This Vibrio atlanticus (strain LGP32) (Vibrio splendidus (strain Mel32)) protein is Periplasmic nitrate reductase.